The chain runs to 294 residues: Mitochondrial HMG-box protein CIM1 (294 aa).

A mitochondrion-targeting transit peptide spans 1–90; that stretch reads MKATLLLKAQ…RLYYASFCQS (90 aa). The interval 27–102 is HMG-box A; the sequence is NRTPYTAFQY…IDILNVSKIE (76 aa). Residues 110 to 258 are HMG-box B; it reads PIPAMSEYLL…IQILQKNMDI (149 aa).

Its subcellular location is the mitochondrion matrix. In terms of biological role, mitochondrial HMG-box protein that limits the copy number of mitochondrial DNA (mtDNA), antagonizing HMG-box containing protein ABF2, a mtDNA packaging factor. This Saccharomyces cerevisiae (strain ATCC 204508 / S288c) (Baker's yeast) protein is Mitochondrial HMG-box protein CIM1.